A 370-amino-acid chain; its full sequence is Tryptophan--tRNA ligase (370 aa).

The short motif at 75–83 is the 'HIGH' region element; sequence PSGKMHFGH. The 'KMSKS' region signature appears at 255-259; that stretch reads KMSSS.

The protein belongs to the class-I aminoacyl-tRNA synthetase family.

The protein resides in the cytoplasm. The catalysed reaction is tRNA(Trp) + L-tryptophan + ATP = L-tryptophyl-tRNA(Trp) + AMP + diphosphate + H(+). In Methanocaldococcus jannaschii (strain ATCC 43067 / DSM 2661 / JAL-1 / JCM 10045 / NBRC 100440) (Methanococcus jannaschii), this protein is Tryptophan--tRNA ligase.